Here is a 237-residue protein sequence, read N- to C-terminus: Ribosomal RNA small subunit methyltransferase G (237 aa).

Residues Gly78, Phe83, 129–130 (AE), and Arg146 contribute to the S-adenosyl-L-methionine site.

This sequence belongs to the methyltransferase superfamily. RNA methyltransferase RsmG family.

It localises to the cytoplasm. Specifically methylates the N7 position of a guanine in 16S rRNA. The protein is Ribosomal RNA small subunit methyltransferase G of Mesoplasma florum (strain ATCC 33453 / NBRC 100688 / NCTC 11704 / L1) (Acholeplasma florum).